The primary structure comprises 397 residues: Acetate kinase (397 aa).

N8 contributes to the Mg(2+) binding site. ATP is bound at residue K15. Position 92 (R92) interacts with substrate. D149 (proton donor/acceptor) is an active-site residue. ATP is bound by residues 209–213 (HLGNG), 283–285 (DFR), and 331–335 (GVGEN). Residue E385 coordinates Mg(2+).

The protein belongs to the acetokinase family. In terms of assembly, homodimer. Mg(2+) serves as cofactor. Mn(2+) is required as a cofactor.

The protein resides in the cytoplasm. The enzyme catalyses acetate + ATP = acetyl phosphate + ADP. It participates in metabolic intermediate biosynthesis; acetyl-CoA biosynthesis; acetyl-CoA from acetate: step 1/2. Catalyzes the formation of acetyl phosphate from acetate and ATP. Can also catalyze the reverse reaction. The chain is Acetate kinase from Corynebacterium glutamicum (strain R).